Consider the following 962-residue polypeptide: SH3 domain-binding protein 4 (962 aa).

The SH3 1 domain maps to 55-114 (GNAKEVIAIKDYCPNNFTTLKFSKGDHLYVLDTSGGEWWYAHNTTEMGYIPSSYVQPLNY). Phosphoserine occurs at positions 131, 245, 250, 278, and 295. The 138-residue stretch at 316-453 (TNIVCKLDSS…LEPCMYLAIV (138 aa)) folds into the ZU5 domain. Residue Ser636 is modified to Phosphoserine. One can recognise an SH3 2 domain in the interval 653–723 (SSLKFGKLLK…HTKNVLVVGK (71 aa)).

As to quaternary structure, homodimer or homooligomer. Interacts with DNM2, EPS15, clathrin, the adapter protein complex 2/AP-2 and TFRC. Interacts with the Rag GTPases RRAGA, RRAGB, RRAGC and RRAGD; the interaction is most probably direct, preferentially occurs with their inactive GDP-bound form and is negatively regulated by amino acids. Post-translationally, phosphorylated upon EGF stimulation. Phosphorylation prevents interaction with DNM2.

It localises to the membrane. It is found in the clathrin-coated pit. Its subcellular location is the cytoplasmic vesicle. The protein resides in the clathrin-coated vesicle. The protein localises to the nucleus. May function in transferrin receptor internalization at the plasma membrane through a cargo-specific control of clathrin-mediated endocytosis. Alternatively, may act as a negative regulator of the amino acid-induced TOR signaling by inhibiting the formation of active Rag GTPase complexes. Preferentially binds inactive Rag GTPase complexes and prevents their interaction with the mTORC1 complex inhibiting its relocalization to lysosomes and its activation. Thereby, may indirectly regulate cell growth, proliferation and autophagy. The chain is SH3 domain-binding protein 4 (Sh3bp4) from Mus musculus (Mouse).